The following is a 246-amino-acid chain: Probable phosphatase ASA_1316 (246 aa).

Zn(2+) is bound by residues His-8, His-10, His-16, His-41, Glu-74, His-102, His-132, Asp-193, and His-195.

It belongs to the PHP family. Zn(2+) is required as a cofactor.

This Aeromonas salmonicida (strain A449) protein is Probable phosphatase ASA_1316.